A 47-amino-acid chain; its full sequence is Photosystem II reaction center protein K (47 aa).

A propeptide spanning residues 1–10 (MASFTLDLLA) is cleaved from the precursor. The chain crosses the membrane as a helical span at residues 19–39 (FSPLIDILPLIPVFFLLLAFV).

Belongs to the PsbK family. As to quaternary structure, PSII is composed of 1 copy each of membrane proteins PsbA, PsbB, PsbC, PsbD, PsbE, PsbF, PsbH, PsbI, PsbJ, PsbK, PsbL, PsbM, PsbT, PsbX, PsbY, PsbZ, Psb30/Ycf12, peripheral proteins PsbO, CyanoQ (PsbQ), PsbU, PsbV and a large number of cofactors. It forms dimeric complexes.

The protein resides in the cellular thylakoid membrane. One of the components of the core complex of photosystem II (PSII). PSII is a light-driven water:plastoquinone oxidoreductase that uses light energy to abstract electrons from H(2)O, generating O(2) and a proton gradient subsequently used for ATP formation. It consists of a core antenna complex that captures photons, and an electron transfer chain that converts photonic excitation into a charge separation. The chain is Photosystem II reaction center protein K from Parasynechococcus marenigrum (strain WH8102).